Here is a 208-residue protein sequence, read N- to C-terminus: Probable GTP-binding protein EngB (208 aa).

Residues 23–205 (LTSEMVVLGR…RQTLLKHLLT (183 aa)) form the EngB-type G domain. GTP contacts are provided by residues 31 to 38 (GRSNVGKS), 57 to 61 (GKTRL), 84 to 87 (DLPG), 154 to 157 (TKFD), and 182 to 184 (FNA). Mg(2+)-binding residues include S38 and T59.

It belongs to the TRAFAC class TrmE-Era-EngA-EngB-Septin-like GTPase superfamily. EngB GTPase family. It depends on Mg(2+) as a cofactor.

Functionally, necessary for normal cell division and for the maintenance of normal septation. The sequence is that of Probable GTP-binding protein EngB from Helicobacter pylori (strain ATCC 700392 / 26695) (Campylobacter pylori).